The chain runs to 274 residues: Urease accessory protein UreD (274 aa).

Belongs to the UreD family. UreD, UreF and UreG form a complex that acts as a GTP-hydrolysis-dependent molecular chaperone, activating the urease apoprotein by helping to assemble the nickel containing metallocenter of UreC. The UreE protein probably delivers the nickel.

The protein localises to the cytoplasm. Its function is as follows. Required for maturation of urease via the functional incorporation of the urease nickel metallocenter. The chain is Urease accessory protein UreD from Klebsiella pneumoniae subsp. pneumoniae (strain ATCC 700721 / MGH 78578).